The chain runs to 390 residues: MSSFKFIPKKILLLGSGELGKELVVEAKRLGLEVIAIDKYENAPAMQLADNSFVIDMSDKEILKKKIKELNPDFVVPEIEALSIEALKELEDEGINIVPNARTVEITMNRDKIRDLASKELNIKTAKFSYVFNVDELEIKSSEIGFPLLIKPLMSSSGKGQSLVNRKEDLLLAWNDALKNSRGKIVGVILEEFLNFDYEFTLLTIRKTSGENIFCEPIGHEQYKGDYQCSWQPLDMNQSLINEARKMTTKILNNLNGSGIYGVEFFVRGKEVIFSELSPRPHDTGMVTLVSQNINEFELHLRAFLNLPIPNISLLKPSATRVIISDKESNTPSYSGLNEALELENTKVLIFGKPTAKKGRRMGVVLSTDDDLNIARENADKSALKIKIVS.

N(1)-(5-phospho-beta-D-ribosyl)glycinamide-binding positions include glutamate 18–leucine 19 and glutamate 78. ATP is bound by residues arginine 110, lysine 151, serine 156–glutamine 161, glutamate 191–leucine 194, and glutamate 199. The region spanning aspartate 115–leucine 305 is the ATP-grasp domain. Glutamate 264 and glutamate 276 together coordinate Mg(2+). Residues aspartate 283, lysine 353, and arginine 360–arginine 361 each bind N(1)-(5-phospho-beta-D-ribosyl)glycinamide.

It belongs to the PurK/PurT family. Homodimer.

It carries out the reaction N(1)-(5-phospho-beta-D-ribosyl)glycinamide + formate + ATP = N(2)-formyl-N(1)-(5-phospho-beta-D-ribosyl)glycinamide + ADP + phosphate + H(+). The protein operates within purine metabolism; IMP biosynthesis via de novo pathway; N(2)-formyl-N(1)-(5-phospho-D-ribosyl)glycinamide from N(1)-(5-phospho-D-ribosyl)glycinamide (formate route): step 1/1. Functionally, involved in the de novo purine biosynthesis. Catalyzes the transfer of formate to 5-phospho-ribosyl-glycinamide (GAR), producing 5-phospho-ribosyl-N-formylglycinamide (FGAR). Formate is provided by PurU via hydrolysis of 10-formyl-tetrahydrofolate. This chain is Formate-dependent phosphoribosylglycinamide formyltransferase, found in Prochlorococcus marinus subsp. pastoris (strain CCMP1986 / NIES-2087 / MED4).